Reading from the N-terminus, the 350-residue chain is Biotin synthase (350 aa).

The 228-residue stretch at 41-268 folds into the Radical SAM core domain; that stretch reads NEVQISRLLS…KSRVRLSAGR (228 aa). 3 residues coordinate [4Fe-4S] cluster: Cys-56, Cys-60, and Cys-63. Positions 100, 131, 191, and 263 each coordinate [2Fe-2S] cluster.

It belongs to the radical SAM superfamily. Biotin synthase family. As to quaternary structure, homodimer. [4Fe-4S] cluster is required as a cofactor. Requires [2Fe-2S] cluster as cofactor.

The enzyme catalyses (4R,5S)-dethiobiotin + (sulfur carrier)-SH + 2 reduced [2Fe-2S]-[ferredoxin] + 2 S-adenosyl-L-methionine = (sulfur carrier)-H + biotin + 2 5'-deoxyadenosine + 2 L-methionine + 2 oxidized [2Fe-2S]-[ferredoxin]. It functions in the pathway cofactor biosynthesis; biotin biosynthesis; biotin from 7,8-diaminononanoate: step 2/2. Catalyzes the conversion of dethiobiotin (DTB) to biotin by the insertion of a sulfur atom into dethiobiotin via a radical-based mechanism. This chain is Biotin synthase, found in Shewanella sp. (strain ANA-3).